The following is a 473-amino-acid chain: Vasculin (473 aa).

Disordered stretches follow at residues 1–25 (MAQH…SSLN), 45–169 (RRHN…KSRA), and 191–342 (VGNL…QERD). Ser49 is subject to Phosphoserine. Arg87 carries the omega-N-methylarginine modification. Positions 93–107 (GSSRSRSSIFHSGKS) are enriched in low complexity. The span at 119-133 (ETGRKEDKRERKQFE) shows a compositional bias: basic and acidic residues. 2 stretches are compositionally biased toward polar residues: residues 194–204 (LPSQPVKNGTG) and 251–286 (AFKS…QQPR). Residues Ser274, Ser276, Ser322, and Ser381 each carry the phosphoserine modification. Positions 293–329 (MRTDKKSEFLKALKRDRVEEEHEDESRAGSEKDDDSF) are enriched in basic and acidic residues. A disordered region spans residues 444–473 (GPWKNSTFKPTTENDDTETSSSDTSDDDDV). The span at 456-473 (ENDDTETSSSDTSDDDDV) shows a compositional bias: acidic residues.

This sequence belongs to the vasculin family. As to quaternary structure, interacts with GTF2B, GTF2F2, RNA polymerase II and TBP.

Its subcellular location is the nucleus. Functionally, functions as a GC-rich promoter-specific transactivating transcription factor. In Pongo abelii (Sumatran orangutan), this protein is Vasculin (GPBP1).